Here is a 220-residue protein sequence, read N- to C-terminus: MASATDSRYGQKESSDQNFDYMFKILIIGNSSVGKTSFLFRYADDSFTPAFVSTVGIDFKVKTIYRNDKRIKLQIWDTAGQERYRTITTAYYRGAMGFILMYDITNEESFNAVQDWSTQIKTYSWDNAQVLLVGNKCDMEDERVVSSERGRQLADHLGFEFFEASAKDNINVKQTFERLVDVICEKMSESLDTADPAVTGAKQGPQLSDQQVPPHQDCAC.

GTP-binding residues include Ser-31, Ser-32, Val-33, Gly-34, Lys-35, Thr-36, Ser-37, Thr-48, Pro-49, Ser-53, and Thr-54. Position 36 (Thr-36) interacts with Mg(2+). The short motif at 49-58 (PAFVSTVGID) is the Switch 1 element. Mg(2+) is bound by residues Thr-54 and Asp-77. Gly-80 is a GTP binding site. Positions 80–96 (GQERYRTITTAYYRGAM) match the Switch 2 motif. The residue at position 86 (Thr-86) is a Phosphothreonine; by LRRK2. Asn-135, Lys-136, Asp-138, Ala-166, and Lys-167 together coordinate GTP. A phosphoserine mark is found at Ser-188 and Ser-190. A disordered region spans residues 194–220 (ADPAVTGAKQGPQLSDQQVPPHQDCAC). 2 S-geranylgeranyl cysteine lipidation sites follow: Cys-218 and Cys-220. At Cys-220 the chain carries Cysteine methyl ester.

This sequence belongs to the small GTPase superfamily. Rab family. As to quaternary structure, interacts with RIMS1 and RIMS2. Interacts with Rabphilin-3A/RPH3A and Rab effector Noc2/RPH3AL. Interacts with SYTL4. Interacts with RAB3IP. Interacts with SGSM1 and SGSM3. Interacts with SYT1. Interacts with MYH9; this interaction is essential for lysosome exocytosis and plasma membrane repair. Interacts with STXBP1; this interaction promotes RAB3A dissociation from the vesicle membrane. Interacts with SNCA. The GTP-bound form interacts with REP15. Interacts with GDI1, GDI2, CHM and CHML; phosphorylation at Thr-86 disrupts these interactions. Interacts with MADD (via uDENN domain); the GTP-bound form is preferred for interaction. It depends on Mg(2+) as a cofactor. Post-translationally, phosphorylation of Thr-86 in the switch II region by LRRK2 prevents the association of RAB regulatory proteins, including CHM, CHML and RAB GDP dissociation inhibitors GDI1 and GDI2. In terms of tissue distribution, specifically expressed in brain.

It is found in the cytoplasm. The protein resides in the cytosol. The protein localises to the lysosome. It localises to the cytoplasmic vesicle. Its subcellular location is the secretory vesicle. It is found in the cell projection. The protein resides in the axon. The protein localises to the cell membrane. It localises to the presynapse. Its subcellular location is the postsynapse. It carries out the reaction GTP + H2O = GDP + phosphate + H(+). With respect to regulation, regulated by guanine nucleotide exchange factors (GEFs) including RAB3IL1 and MADD which promote the exchange of bound GDP for free GTP. Regulated by GTPase activating proteins (GAPs) including RAB3GAP1 and TBC1D10B which increase the GTP hydrolysis activity. Inhibited by GDP dissociation inhibitors (GDIs) which prevent Rab-GDP dissociation. Functionally, the small GTPases Rab are key regulators of intracellular membrane trafficking, from the formation of transport vesicles to their fusion with membranes. Rabs cycle between an inactive GDP-bound form and an active GTP-bound form that is able to recruit to membranes different sets of downstream effectors directly responsible for vesicle formation, movement, tethering and fusion. RAB3A plays a central role in regulated exocytosis and secretion. Controls the recruitment, tethering and docking of secretory vesicles to the plasma membrane. Upon stimulation, switches to its active GTP-bound form, cycles to vesicles and recruits effectors such as RIMS1, RIMS2, Rabphilin-3A/RPH3A, RPH3AL or SYTL4 to help the docking of vesicules onto the plasma membrane. Upon GTP hydrolysis by GTPase-activating protein, dissociates from the vesicle membrane allowing the exocytosis to proceed. Stimulates insulin secretion through interaction with RIMS2 or RPH3AL effectors in pancreatic beta cells. Regulates calcium-dependent lysosome exocytosis and plasma membrane repair (PMR) via the interaction with 2 effectors, SYTL4 and myosin-9/MYH9. Acts as a positive regulator of acrosome content secretion in sperm cells by interacting with RIMS1. Also plays a role in the regulation of dopamine release by interacting with synaptotagmin I/SYT. This Homo sapiens (Human) protein is Ras-related protein Rab-3A.